Consider the following 178-residue polypeptide: Large ribosomal subunit protein uL6 (178 aa).

Belongs to the universal ribosomal protein uL6 family. In terms of assembly, part of the 50S ribosomal subunit.

In terms of biological role, this protein binds to the 23S rRNA, and is important in its secondary structure. It is located near the subunit interface in the base of the L7/L12 stalk, and near the tRNA binding site of the peptidyltransferase center. The polypeptide is Large ribosomal subunit protein uL6 (Helicobacter pylori (strain G27)).